The primary structure comprises 394 residues: Tubby-like F-box protein 2 (394 aa).

Residues 21–44 are disordered; it reads SKRSWSKSSHIAPDQTTPPLDNIP. Residues 26–44 are compositionally biased toward polar residues; the sequence is SKSSHIAPDQTTPPLDNIP. The 56-residue stretch at 46 to 101 folds into the F-box domain; the sequence is SPWASLPPELLHDIIWRVEESETAWPARAAVVSCASVCKSWRGITMEIVRIPEQCG. 2 disordered regions span residues 200-225 and 268-297; these read ASST…PTNS and IEEE…PSLR.

Belongs to the TUB family. Ubiquitous.

The protein is Tubby-like F-box protein 2 of Arabidopsis thaliana (Mouse-ear cress).